The following is a 442-amino-acid chain: Glutamyl-tRNA reductase (442 aa).

Substrate is bound by residues 49 to 52 (TCNR), serine 109, 114 to 116 (EGQ), and glutamine 120. Cysteine 50 functions as the Nucleophile in the catalytic mechanism. Residue 198–203 (GAGRMA) coordinates NADP(+). Residues 420–442 (MAAAQRLFDLPGDDADRDRSDAK) form a disordered region. Residues 433-442 (DADRDRSDAK) are compositionally biased toward basic and acidic residues.

The protein belongs to the glutamyl-tRNA reductase family. In terms of assembly, homodimer.

It catalyses the reaction (S)-4-amino-5-oxopentanoate + tRNA(Glu) + NADP(+) = L-glutamyl-tRNA(Glu) + NADPH + H(+). It participates in porphyrin-containing compound metabolism; protoporphyrin-IX biosynthesis; 5-aminolevulinate from L-glutamyl-tRNA(Glu): step 1/2. The protein operates within porphyrin-containing compound metabolism; chlorophyll biosynthesis. Its function is as follows. Catalyzes the NADPH-dependent reduction of glutamyl-tRNA(Glu) to glutamate 1-semialdehyde (GSA). The polypeptide is Glutamyl-tRNA reductase (Synechococcus sp. (strain RCC307)).